Here is a 427-residue protein sequence, read N- to C-terminus: Membrane-bound hydrogenase subunit alpha (427 aa).

Cys-68, Cys-71, Cys-374, and Cys-377 together coordinate Ni(2+).

The protein belongs to the complex I 49 kDa subunit family. As to quaternary structure, the membrane-bound hydrogenase complex is composed of MbhK and MbhL, and may also contain MbhJ. Requires Ni(2+) as cofactor.

Its subcellular location is the cell membrane. It catalyses the reaction H2 + 2 oxidized [2Fe-2S]-[ferredoxin] = 2 reduced [2Fe-2S]-[ferredoxin] + 2 H(+). With respect to regulation, inhibited by 0.1 mM Cu(2+). Its function is as follows. Alpha subunit of a hydrogen-evolving hydrogenase that utilizes protons both as a substrate for hydrogen production and proton translocation. Acts by coupling the redox reaction via ferredoxin and iron-sulfur (Fe-S) clusters to proton translocation across the membrane thereby conserving the redox energy in a proton gradient. The protein is Membrane-bound hydrogenase subunit alpha of Pyrococcus furiosus (strain ATCC 43587 / DSM 3638 / JCM 8422 / Vc1).